The chain runs to 288 residues: Small ribosomal subunit protein uS2 (288 aa).

The interval 267-288 (EEVEEVEEEFIPSEIEDEDEKF) is disordered.

This sequence belongs to the universal ribosomal protein uS2 family.

This chain is Small ribosomal subunit protein uS2, found in Petrotoga mobilis (strain DSM 10674 / SJ95).